A 1050-amino-acid chain; its full sequence is Probable E3 ubiquitin-protein ligase HERC3 (1050 aa).

RCC1 repeat units lie at residues 1-51 (MLCW…FLLE), 52-101 (DGEV…ALSD), 102-154 (RGQL…ALAA), 156-207 (GQFF…ALSL), 208-259 (SGAV…VLTK), 261-311 (GGVF…AFVP), and 313-366 (SGLI…IVKQ). One can recognise an HECT domain in the interval 951–1050 (YKGDYSATHP…LDNYEGFSLA (100 aa)). Catalysis depends on C1018, which acts as the Glycyl thioester intermediate.

Ubiquitinated; which promotes degradation by the proteasome.

The protein localises to the cytoplasm. It is found in the cytoplasmic vesicle. The catalysed reaction is S-ubiquitinyl-[E2 ubiquitin-conjugating enzyme]-L-cysteine + [acceptor protein]-L-lysine = [E2 ubiquitin-conjugating enzyme]-L-cysteine + N(6)-ubiquitinyl-[acceptor protein]-L-lysine.. Its pathway is protein modification; protein ubiquitination. In terms of biological role, E3 ubiquitin-protein ligase which accepts ubiquitin from an E2 ubiquitin-conjugating enzyme in the form of a thioester and then directly transfers the ubiquitin to targeted substrates. The protein is Probable E3 ubiquitin-protein ligase HERC3 (HERC3) of Homo sapiens (Human).